We begin with the raw amino-acid sequence, 69 residues long: MKEGIHLTYYHDAVVRCACGETFITGSTKKEIHVEICSKCHPFFTGKQKFVDTTGRVERFMKKYGLDQK.

Residues Cys-17, Cys-19, Cys-37, and Cys-40 each coordinate Zn(2+).

Belongs to the bacterial ribosomal protein bL31 family. Type A subfamily. As to quaternary structure, part of the 50S ribosomal subunit. It depends on Zn(2+) as a cofactor.

In terms of biological role, binds the 23S rRNA. The chain is Large ribosomal subunit protein bL31 from Caldicellulosiruptor saccharolyticus (strain ATCC 43494 / DSM 8903 / Tp8T 6331).